Reading from the N-terminus, the 281-residue chain is MGKGDWRQGRVEMPCAHVSRLHKTCVQVRVRVTMASSEEDGTNGASEASDEKEAAGKRRRLGLLATAWLTFYNIAMTAGWLVLAIAMVRFYMEKGTHRGLYKSIQKTLKFFQTFALLEVVHCLIGIVPTSVLVTGVQVSSRIFMVWLITHSIKPIQNEESVVLFLVSWTVTEITRYSFYTFSLLDHLPHFIKWARYNLFIILYPVGVAGELLTIYAALPYVKKSGMFSVRLPNKYNVSFDYYYFLLITMASYIPLFPQLYFHMLRQRRKVLHGEVIAEKDD.

Residues 1–68 (MGKGDWRQGR…RRLGLLATAW (68 aa)) lie on the Cytoplasmic side of the membrane. A helical transmembrane segment spans residues 69-88 (LTFYNIAMTAGWLVLAIAMV). Topologically, residues 89 to 107 (RFYMEKGTHRGLYKSIQKT) are lumenal. Residues 108-124 (LKFFQTFALLEVVHCLI) traverse the membrane as a helical segment. Residues 125 to 134 (GIVPTSVLVT) lie on the Cytoplasmic side of the membrane. A helical transmembrane segment spans residues 135 to 152 (GVQVSSRIFMVWLITHSI). At 153–158 (KPIQNE) the chain is on the lumenal side. Residues 159–173 (ESVVLFLVSWTVTEI) traverse the membrane as a helical segment. Topologically, residues 174-196 (TRYSFYTFSLLDHLPHFIKWARY) are cytoplasmic. The chain crosses the membrane as a helical span at residues 197 to 214 (NLFIILYPVGVAGELLTI). Catalysis depends on residues Tyr203 and Glu210. Residues 215 to 244 (YAALPYVKKSGMFSVRLPNKYNVSFDYYYF) lie on the Lumenal side of the membrane. The N-linked (GlcNAc...) asparagine glycan is linked to Asn236. A helical transmembrane segment spans residues 245 to 262 (LLITMASYIPLFPQLYFH). Topologically, residues 263-281 (MLRQRRKVLHGEVIAEKDD) are cytoplasmic.

The protein belongs to the very long-chain fatty acids dehydratase HACD family. In terms of assembly, may interact with enzymes of the ELO family (including ELOVL1); with those enzymes that mediate condensation, the first of the four steps of the reaction cycle responsible for fatty acids elongation, may be part of a larger fatty acids elongase complex. Interacts with TECR. In terms of processing, N-glycosylated. In terms of tissue distribution, expressed at high levels in heart, skeletal muscle and testis, weak expression in kidney and liver.

Its subcellular location is the endoplasmic reticulum membrane. It carries out the reaction a very-long-chain (3R)-3-hydroxyacyl-CoA = a very-long-chain (2E)-enoyl-CoA + H2O. The enzyme catalyses (3R)-hydroxyhexadecanoyl-CoA = (2E)-hexadecenoyl-CoA + H2O. It catalyses the reaction (3R)-hydroxyoctadecanoyl-CoA = (2E)-octadecenoyl-CoA + H2O. The catalysed reaction is (3R)-hydroxyeicosanoyl-CoA = (2E)-eicosenoyl-CoA + H2O. It carries out the reaction (3R)-hydroxydocosanoyl-CoA = (2E)-docosenoyl-CoA + H2O. The enzyme catalyses (3R)-hydroxytetracosanoyl-CoA = (2E)-tetracosenoyl-CoA + H2O. It catalyses the reaction (3R)-hydroxyhexacosanoyl-CoA = (2E)-hexacosenoyl-CoA + H2O. It participates in lipid metabolism; fatty acid biosynthesis. This Mus musculus (Mouse) protein is Very-long-chain (3R)-3-hydroxyacyl-CoA dehydratase 1.